A 519-amino-acid chain; its full sequence is Pleckstrin homology domain-containing family A member 8 (519 aa).

Residues 1 to 93 form the PH domain; that stretch reads MEGVLYKWTN…WLVALGSAKA (93 aa). Thr139 carries the phosphothreonine modification. Phosphoserine is present on Ser145. A Phosphothreonine modification is found at Thr153. The tract at residues 310-519 is glycolipid transfer protein homology domain; the sequence is TFFSTMNTSF…VHGLESDEVV (210 aa).

In terms of assembly, homodimer. Interacts with ARF1; the interaction together with phosphatidylinositol 4-phosphate binding is required for FAPP2 GlcCer transfer ability. In terms of tissue distribution, expressed in kidney cell lines.

The protein resides in the golgi apparatus. It is found in the trans-Golgi network membrane. Its subcellular location is the membrane. Cargo transport protein that is required for apical transport from the Golgi complex. Transports AQP2 from the trans-Golgi network (TGN) to sites of AQP2 phosphorylation. Mediates the non-vesicular transport of glucosylceramide (GlcCer) from the trans-Golgi network (TGN) to the plasma membrane and plays a pivotal role in the synthesis of complex glycosphingolipids. Binding of both phosphatidylinositol 4-phosphate (PIP) and ARF1 are essential for the GlcCer transfer ability. Also required for primary cilium formation, possibly by being involved in the transport of raft lipids to the apical membrane, and for membrane tubulation. The sequence is that of Pleckstrin homology domain-containing family A member 8 (PLEKHA8) from Homo sapiens (Human).